Reading from the N-terminus, the 258-residue chain is MSFIKPIYQDINSILIGQKVKRPKSGTLSGHAAGEPFEKLVYKFLKENLSDLTFKQYEYLNDLFMKKPAIIGHEARYKLFNSPTLLFLLSRGKAATENWSIENLFEEKQNDTADILLVKDQFYELLDVKTRNISKSAQAPNIISAYKLAQTCAKMIDNKEFDLFDINYLEVDWELNGEDLVCVSTSFAELFKSEPSELYINWAAAMQIQFHVRDLDQGFNGTREEWAKSYLKHFVTQAEQRAISMIDKFVKPFKKYIL.

It carries out the reaction Endonucleolytic cleavage of DNA to give specific double-stranded fragments with terminal 5'-phosphates.. Its function is as follows. A P subtype restriction enzyme that recognizes the double-stranded sequence 5'-GTYRAC-3' and cleaves after Y-3. This Haemophilus influenzae (strain ATCC 51907 / DSM 11121 / KW20 / Rd) protein is Type II restriction enzyme HindII (hindIIR).